The primary structure comprises 517 residues: Histone H4 transcription factor (517 aa).

C2H2-type zinc fingers lie at residues 15–39, 129–153, and 169–193; these read LQCE…VTQH, FLCL…VEAH, and VLCG…LRSH. The segment at 199–221 adopts a C2H2-type 4; degenerate zinc-finger fold; that stretch reads VACPTCGGMFANNTKFLDHIRRQ. 5 C2H2-type zinc fingers span residues 229 to 251, 255 to 278, 284 to 306, 312 to 337, and 345 to 368; these read FQCS…MRNH, YKCP…RFRH, FKCD…LDTH, YRCD…RKVH, and YKCH…RKKH. Residues 373-517 are interaction with NPAT; it reads PSGHPRFRYK…IAEEPEIQMV (145 aa). The segment at 374 to 407 is required for activation of histone H4 transcription and contributes to DNA-binding; the sequence is SGHPRFRYKEHEDGYMRLQLVRYESVELTQQLLR. The tract at residues 431 to 460 is disordered; that stretch reads TVPGEPGRKEEEEEGKGSEGTALSASQDNP. Residues 451–460 show a composition bias toward polar residues; the sequence is TALSASQDNP.

As to quaternary structure, binds MBD2 and a histone deacetylase complex. Interacts with NPAT. Post-translationally, ubiquitinated. Ubiquitination may lead to proteasome-mediated degradation. As to expression, ubiquitous. Highly expressed in brain, heart, skeletal muscle, spleen, kidney, small intestine, placenta and liver.

Its subcellular location is the nucleus. Transcriptional repressor that binds to the consensus sequence 5'-CGGACGTT-3' and to the RB1 promoter. Transcriptional activator that promotes histone H4 gene transcription at the G1/S phase transition in conjunction with NPAT. Also activates transcription of the ATM and PRKDC genes. Autoregulates its expression by associating with its own promoter. The sequence is that of Histone H4 transcription factor (HINFP) from Homo sapiens (Human).